The following is a 433-amino-acid chain: Delta-aminolevulinic acid dehydratase, chloroplastic (433 aa).

Residues 1–56 constitute a chloroplast transit peptide; it reads MASTFNIPCNAGTIKNFNNSQRNLGFSSNLGINFAKTRFSNCGDSGRIPSQLVVRA. The segment at 83–115 is disordered; that stretch reads NAPSAPPVPPTPKAPSGTPSVSPLSLGRRPRRN. The segment covering 86–95 has biased composition (pro residues); that stretch reads SAPPVPPTPK. The Schiff-base intermediate with substrate role is filled by K301. 2 residues coordinate 5-aminolevulinate: R311 and K323. E339 is a binding site for Mg(2+). K354 serves as the catalytic Schiff-base intermediate with substrate. Residues S380 and Y419 each coordinate 5-aminolevulinate.

Belongs to the ALAD family. Homooctamer. Requires Mg(2+) as cofactor.

Its subcellular location is the plastid. It is found in the chloroplast. The enzyme catalyses 2 5-aminolevulinate = porphobilinogen + 2 H2O + H(+). It functions in the pathway porphyrin-containing compound metabolism; protoporphyrin-IX biosynthesis; coproporphyrinogen-III from 5-aminolevulinate: step 1/4. Catalyzes an early step in the biosynthesis of tetrapyrroles. Binds two molecules of 5-aminolevulinate per subunit, each at a distinct site, and catalyzes their condensation to form porphobilinogen. The protein is Delta-aminolevulinic acid dehydratase, chloroplastic (HEMB) of Spinacia oleracea (Spinach).